Consider the following 242-residue polypeptide: Glucosamine-6-phosphate deaminase (242 aa).

D67 acts as the Proton acceptor; for enolization step in catalysis. The active-site For ring-opening step is N136. H138 acts as the Proton acceptor; for ring-opening step in catalysis. E143 functions as the For ring-opening step in the catalytic mechanism.

The protein belongs to the glucosamine/galactosamine-6-phosphate isomerase family. NagB subfamily.

It catalyses the reaction alpha-D-glucosamine 6-phosphate + H2O = beta-D-fructose 6-phosphate + NH4(+). The protein operates within amino-sugar metabolism; N-acetylneuraminate degradation; D-fructose 6-phosphate from N-acetylneuraminate: step 5/5. In terms of biological role, catalyzes the reversible isomerization-deamination of glucosamine 6-phosphate (GlcN6P) to form fructose 6-phosphate (Fru6P) and ammonium ion. The polypeptide is Glucosamine-6-phosphate deaminase (Alkaliphilus metalliredigens (strain QYMF)).